Here is a 107-residue protein sequence, read N- to C-terminus: MALPPLTPEQRAAALEKAAAARRERAEVKNRLKHSGASLHEVIKQGQENDVIGKMKVSALLESLPGVGKVRAKQIMERLGISESRRVRGLGSNQIASLEREFGSTGS.

The interval 1–20 (MALPPLTPEQRAAALEKAAA) is disordered. Residues 9-18 (EQRAAALEKA) show a composition bias toward low complexity. Lys54 is a DNA binding site. The short motif at 64–71 (LPGVGKVR) is the H2TH motif, binds DNA element. Residues Ser82, Arg85, Arg88, Ser92, Asn93, and Gln94 each coordinate DNA. The lid, binds DNA stretch occupies residues 82 to 94 (SESRRVRGLGSNQ).

This sequence belongs to the actinobacterial IHF (aIHF) family. As to quaternary structure, monomer.

The protein localises to the cytoplasm. The protein resides in the spore. Its subcellular location is the nucleoid. In terms of biological role, a nucleoid-associated protein (NAP) that probably plays a role in chromosome compactation. Contributes to development and secondary metabolism, but is dispensable for growth and viability. Binds to the promoter region of a number of genes (including itself); multiple molecules of the protein bind to the DNA simultaneously, deletion alters the expression of about 30 genes (both up- and down-regulation occurs). Plays a role in controlling viability. Binds dsDNA without any obvious sequence specificity, in a concentration and length-dependent manner. Promotes supercoiling in a topoisomerase-dependent manner (counteracts TopA plasmid relaxation). Binds DNA as a monomer, contacting 8 base pairs via the phosphate backbone; each monomer can bind 2 DNA duplexes, allowing a bridging function. Alters DNA topology, constraining negative supercoils, possibly by DNA twist. Longer dsDNA binds more than one sIHF subunit. The protein is Integration host factor of Streptomyces coelicolor (strain ATCC BAA-471 / A3(2) / M145).